A 354-amino-acid polypeptide reads, in one-letter code: DNA polymerase IV (354 aa).

One can recognise a UmuC domain in the interval 6–187 (IIHVDCDCFY…LPVARLHGVG (182 aa)). 2 residues coordinate Mg(2+): Asp-10 and Asp-105. Glu-106 is an active-site residue.

Belongs to the DNA polymerase type-Y family. In terms of assembly, monomer. The cofactor is Mg(2+).

Its subcellular location is the cytoplasm. It catalyses the reaction DNA(n) + a 2'-deoxyribonucleoside 5'-triphosphate = DNA(n+1) + diphosphate. Poorly processive, error-prone DNA polymerase involved in untargeted mutagenesis. Copies undamaged DNA at stalled replication forks, which arise in vivo from mismatched or misaligned primer ends. These misaligned primers can be extended by PolIV. Exhibits no 3'-5' exonuclease (proofreading) activity. May be involved in translesional synthesis, in conjunction with the beta clamp from PolIII. The sequence is that of DNA polymerase IV from Pseudomonas putida (strain ATCC 47054 / DSM 6125 / CFBP 8728 / NCIMB 11950 / KT2440).